The chain runs to 57 residues: Protein translocase subunit SecE (57 aa).

Residues 33 to 53 (GLGILLVGFIGFVIFSIMTFV) form a helical membrane-spanning segment.

It belongs to the SecE/SEC61-gamma family. Component of the Sec protein translocase complex. Heterotrimer consisting of SecY (alpha), SecG (beta) and SecE (gamma) subunits. The heterotrimers can form oligomers, although 1 heterotrimer is thought to be able to translocate proteins. Interacts with the ribosome. May interact with SecDF, and other proteins may be involved.

The protein resides in the cell membrane. Essential subunit of the Sec protein translocation channel SecYEG. Clamps together the 2 halves of SecY. May contact the channel plug during translocation. In Natronomonas pharaonis (strain ATCC 35678 / DSM 2160 / CIP 103997 / JCM 8858 / NBRC 14720 / NCIMB 2260 / Gabara) (Halobacterium pharaonis), this protein is Protein translocase subunit SecE.